The primary structure comprises 861 residues: Ribosome biogenesis protein BOP1 homolog (861 aa).

The disordered stretch occupies residues 1–237 (MVANKSKATK…GDTSDEEDIR (237 aa)). Positions 29–45 (NGRSTKQPEADSDQSAS) are enriched in polar residues. Composition is skewed to acidic residues over residues 62-77 (DDGD…DASD) and 87-143 (SDSD…EDLA). Basic and acidic residues-rich tracts occupy residues 144 to 156 (EPEK…EGSK), 174 to 190 (ETKK…EKLA), and 212 to 223 (PERKTGRLKNSD). 6 WD repeats span residues 522 to 561 (GHTD…CIKT), 563 to 603 (PTGD…CLLS), 692 to 730 (KSKG…LLKK), 733 to 772 (PSCK…RPYQ), 776 to 815 (LHFS…DLMQ), and 831 to 861 (VNDF…RLYT).

This sequence belongs to the WD repeat BOP1/ERB1 family.

The protein resides in the nucleus. It localises to the nucleolus. It is found in the nucleoplasm. In terms of biological role, required for maturation of ribosomal RNAs and formation of the large ribosomal subunit. This Culex quinquefasciatus (Southern house mosquito) protein is Ribosome biogenesis protein BOP1 homolog.